Here is a 164-residue protein sequence, read N- to C-terminus: FMN reductase (NADH) RutF (164 aa).

This sequence belongs to the non-flavoprotein flavin reductase family. RutF subfamily.

It carries out the reaction FMNH2 + NAD(+) = FMN + NADH + 2 H(+). In terms of biological role, catalyzes the reduction of FMN to FMNH2 which is used to reduce pyrimidine by RutA via the Rut pathway. In Klebsiella pneumoniae subsp. pneumoniae (strain ATCC 700721 / MGH 78578), this protein is FMN reductase (NADH) RutF.